The chain runs to 307 residues: 4-hydroxythreonine-4-phosphate dehydrogenase (307 aa).

The substrate site is built by His126 and Thr127. A divalent metal cation is bound by residues His156, His195, and His251. 3 residues coordinate substrate: Lys259, Asn268, and Arg277.

Belongs to the PdxA family. In terms of assembly, homodimer. Zn(2+) serves as cofactor. It depends on Mg(2+) as a cofactor. Co(2+) is required as a cofactor.

It is found in the cytoplasm. It carries out the reaction 4-(phosphooxy)-L-threonine + NAD(+) = 3-amino-2-oxopropyl phosphate + CO2 + NADH. It functions in the pathway cofactor biosynthesis; pyridoxine 5'-phosphate biosynthesis; pyridoxine 5'-phosphate from D-erythrose 4-phosphate: step 4/5. Functionally, catalyzes the NAD(P)-dependent oxidation of 4-(phosphooxy)-L-threonine (HTP) into 2-amino-3-oxo-4-(phosphooxy)butyric acid which spontaneously decarboxylates to form 3-amino-2-oxopropyl phosphate (AHAP). This is 4-hydroxythreonine-4-phosphate dehydrogenase from Helicobacter pylori (strain G27).